The sequence spans 202 residues: Ion-translocating oxidoreductase complex subunit G (202 aa).

Residues Ala11–Leu31 traverse the membrane as a helical segment. Position 177 is an FMN phosphoryl threonine (Thr177).

Belongs to the RnfG family. As to quaternary structure, the complex is composed of six subunits: RnfA, RnfB, RnfC, RnfD, RnfE and RnfG. The cofactor is FMN.

It is found in the cell inner membrane. In terms of biological role, part of a membrane-bound complex that couples electron transfer with translocation of ions across the membrane. The sequence is that of Ion-translocating oxidoreductase complex subunit G from Pasteurella multocida (strain Pm70).